The following is a 796-amino-acid chain: Protocadherin beta-3 (796 aa).

The first 26 residues, 1-26 (MEAGGERFLRQRQVLLLFVFLGGSLA), serve as a signal peptide directing secretion. The Extracellular portion of the chain corresponds to 27 to 690 (GSESRRYSVA…AQADLLTVYL (664 aa)). Cadherin domains follow at residues 35 to 133 (VAEE…SPVF), 138 to 242 (MHLK…APEF), 247 to 347 (YEVA…PPEL), 352 to 451 (VNSP…APAF), and 456 to 561 (YTLF…SPFV). Residue Asn-169 is glycosylated (N-linked (GlcNAc...) asparagine). N-linked (GlcNAc...) asparagine glycosylation is found at Asn-418 and Asn-436. Asn-567 carries N-linked (GlcNAc...) asparagine glycosylation. In terms of domain architecture, Cadherin 6 spans 568 to 671 (GSAPCTELVP…LVDGFSQPYL (104 aa)). A helical membrane pass occupies residues 691–711 (VVALASVSSLFLFSVLLFVAV). The Cytoplasmic portion of the chain corresponds to 712–796 (RLCRRSRAAS…PSFRKSFEFS (85 aa)).

The protein resides in the cell membrane. Potential calcium-dependent cell-adhesion protein. May be involved in the establishment and maintenance of specific neuronal connections in the brain. In Homo sapiens (Human), this protein is Protocadherin beta-3 (PCDHB3).